Reading from the N-terminus, the 333-residue chain is Adenosine deaminase (333 aa).

Residues His-12 and His-14 each coordinate Zn(2+). Substrate contacts are provided by His-14, Asp-16, and Gly-170. His-197 is a Zn(2+) binding site. Catalysis depends on Glu-200, which acts as the Proton donor. Asp-278 is a Zn(2+) binding site. A substrate-binding site is contributed by Asp-279.

The protein belongs to the metallo-dependent hydrolases superfamily. Adenosine and AMP deaminases family. Adenosine deaminase subfamily. It depends on Zn(2+) as a cofactor.

It catalyses the reaction adenosine + H2O + H(+) = inosine + NH4(+). The catalysed reaction is 2'-deoxyadenosine + H2O + H(+) = 2'-deoxyinosine + NH4(+). In terms of biological role, catalyzes the hydrolytic deamination of adenosine and 2-deoxyadenosine. The protein is Adenosine deaminase of Salmonella typhi.